The chain runs to 246 residues: 4'-phosphopantetheinyl transferase Svp (246 aa).

The span at 223–232 (AGTAEESAEG) shows a compositional bias: low complexity. Residues 223–246 (AGTAEESAEGAGKEATADDRTAVP) are disordered. Residues 233–246 (AGKEATADDRTAVP) show a composition bias toward basic and acidic residues.

Belongs to the P-Pant transferase superfamily. Gsp/Sfp/HetI/AcpT family.

It catalyses the reaction apo-[ACP] + CoA = holo-[ACP] + adenosine 3',5'-bisphosphate + H(+). Transfers the 4'-phosphopantetheine moiety from coenzyme A to a Ser of an acyl-carrier-protein. The enzyme is able to transfer the cofactor to a broad range of enzymes with acyl- or peptidyl-carrier protein domains. The polypeptide is 4'-phosphopantetheinyl transferase Svp (svp) (Streptomyces mobaraensis (Streptoverticillium mobaraense)).